A 213-amino-acid polypeptide reads, in one-letter code: Uridine kinase (213 aa).

Residue 13–20 participates in ATP binding; that stretch reads GASASGKS.

It belongs to the uridine kinase family.

The protein resides in the cytoplasm. It carries out the reaction uridine + ATP = UMP + ADP + H(+). It catalyses the reaction cytidine + ATP = CMP + ADP + H(+). It participates in pyrimidine metabolism; CTP biosynthesis via salvage pathway; CTP from cytidine: step 1/3. Its pathway is pyrimidine metabolism; UMP biosynthesis via salvage pathway; UMP from uridine: step 1/1. This Histophilus somni (strain 129Pt) (Haemophilus somnus) protein is Uridine kinase.